The primary structure comprises 328 residues: MMQDLRLILIVVGAIAIIALLLHGLWTSRKERSSLFRDRPVKRTKQERVETPIESLDEGVGEVRVRTSHPQEKPSFNHLDDDDDEVPVIQHAETKSAQVKTASRQAPFASVQTDYDDPLLGGLSAEQPPHDLSRDPLLGKADESYSQPQHAEPPHVEKPAHQVAPQQHVESQQEPVAPAPEAKPQKLKETVLVLHVAAHHGGVIGGEVLLQSVLQSGFQFGEMGIFHRHLSPAGSGPVLFSLANMVKPGSFDPDTMSDFSTPGVSMFMMVPSYGDANQNFKLMLQSAQRIADDVGGVVLDDERRMMTPQKLESYKARIREVLDANTIA.

Residues 1–6 lie on the Periplasmic side of the membrane; that stretch reads MMQDLR. Residues 7-27 traverse the membrane as a helical segment; that stretch reads LILIVVGAIAIIALLLHGLWT. Over 28–328 the chain is Cytoplasmic; the sequence is SRKERSSLFR…REVLDANTIA (301 aa). A compositionally biased stretch (basic and acidic residues) spans 61–72; sequence GEVRVRTSHPQE. The tract at residues 61-183 is disordered; sequence GEVRVRTSHP…EPVAPAPEAK (123 aa). Polar residues-rich tracts occupy residues 95-104 and 164-174; these read KSAQVKTASR and APQQHVESQQE.

Belongs to the ZipA family. Interacts with FtsZ via their C-terminal domains.

The protein resides in the cell inner membrane. Its function is as follows. Essential cell division protein that stabilizes the FtsZ protofilaments by cross-linking them and that serves as a cytoplasmic membrane anchor for the Z ring. Also required for the recruitment to the septal ring of downstream cell division proteins. The chain is Cell division protein ZipA from Yersinia pestis bv. Antiqua (strain Antiqua).